The sequence spans 634 residues: SPARC-like protein 1 (634 aa).

Residues 1 to 16 form the signal peptide; the sequence is MKAVLLLLYALGIAAA. A disordered region spans residues 50–335; sequence ADIEKHPNHK…DDSKHGASDD (286 aa). The segment covering 51 to 62 has biased composition (basic and acidic residues); sequence DIEKHPNHKAEK. Ser-68, Ser-76, and Ser-84 each carry phosphoserine. Basic and acidic residues predominate over residues 73-83; the sequence is HEQSTEQDKTY. Acidic residues predominate over residues 89–99; sequence LKDEEDGDGDL. A compositionally biased stretch (polar residues) spans 131–144; sequence TVSTPFVDSDQPAN. Residue Asn-144 is glycosylated (N-linked (GlcNAc...) asparagine). 2 positions are modified to phosphoserine: Ser-151 and Ser-159. Composition is skewed to acidic residues over residues 189 to 198 and 205 to 214; these read EKEEEEDPED and NQEEEKEPPE. Residues 233 to 258 show a composition bias toward polar residues; it reads QESSQPTQISKTKNDFEQGSQGQEGD. Residue Ser-259 is modified to Phosphoserine. 2 stretches are compositionally biased toward basic and acidic residues: residues 263-276 and 292-303; these read GEDKAAGSKEHLPH and GNRKDTDEEKAV. Phosphoserine is present on residues Ser-333 and Ser-340. Positions 360–398 are disordered; it reads EETPDESENRSEAGDNQGAKKAESSPNAEPSDEGNSRGH. Positions 366 to 382 are enriched in basic and acidic residues; that stretch reads SENRSEAGDNQGAKKAE. An N-linked (GlcNAc...) asparagine glycan is attached at Asn-368. 2 positions are modified to phosphoserine: Ser-370 and Ser-390. Residues 402–424 enclose the Follistatin-like domain; that stretch reads SCMNFQCKRGHTCKTDQHGKPHC. Disulfide bonds link Cys-403–Cys-414, Cys-408–Cys-424, Cys-426–Cys-460, Cys-432–Cys-453, Cys-442–Cys-479, Cys-485–Cys-596, and Cys-604–Cys-620. The 62-residue stretch at 420-481 folds into the Kazal-like domain; the sequence is GKPHCVCQDP…QLDYFGACKS (62 aa). An N-linked (GlcNAc...) asparagine glycan is attached at Asn-446. Positions 592 to 627 constitute an EF-hand domain; the sequence is PMEHCITRFFEECDPNKDKHITLKEWGHCFGIKEED. Ca(2+)-binding residues include Asp-605, Asn-607, Asp-609, His-611, and Glu-616.

Belongs to the SPARC family. In terms of tissue distribution, expressed in many types of neurons in the brain.

It localises to the secreted. The protein resides in the extracellular space. Its subcellular location is the extracellular matrix. The sequence is that of SPARC-like protein 1 (Sparcl1) from Rattus norvegicus (Rat).